The sequence spans 192 residues: Crossover junction endodeoxyribonuclease RuvC (192 aa).

Active-site residues include aspartate 20, glutamate 80, and aspartate 153. Mg(2+) is bound by residues aspartate 20, glutamate 80, and aspartate 153.

The protein belongs to the RuvC family. As to quaternary structure, homodimer which binds Holliday junction (HJ) DNA. The HJ becomes 2-fold symmetrical on binding to RuvC with unstacked arms; it has a different conformation from HJ DNA in complex with RuvA. In the full resolvosome a probable DNA-RuvA(4)-RuvB(12)-RuvC(2) complex forms which resolves the HJ. Mg(2+) serves as cofactor.

The protein resides in the cytoplasm. It catalyses the reaction Endonucleolytic cleavage at a junction such as a reciprocal single-stranded crossover between two homologous DNA duplexes (Holliday junction).. Functionally, the RuvA-RuvB-RuvC complex processes Holliday junction (HJ) DNA during genetic recombination and DNA repair. Endonuclease that resolves HJ intermediates. Cleaves cruciform DNA by making single-stranded nicks across the HJ at symmetrical positions within the homologous arms, yielding a 5'-phosphate and a 3'-hydroxyl group; requires a central core of homology in the junction. The consensus cleavage sequence is 5'-(A/T)TT(C/G)-3'. Cleavage occurs on the 3'-side of the TT dinucleotide at the point of strand exchange. HJ branch migration catalyzed by RuvA-RuvB allows RuvC to scan DNA until it finds its consensus sequence, where it cleaves and resolves the cruciform DNA. This Christiangramia forsetii (strain DSM 17595 / CGMCC 1.15422 / KT0803) (Gramella forsetii) protein is Crossover junction endodeoxyribonuclease RuvC.